We begin with the raw amino-acid sequence, 196 residues long: uncharacterized protein (196 aa).

The chain crosses the membrane as a helical span at residues 26-46 (ITFFFILLICFICILLLLAIF).

The protein resides in the membrane. This is an uncharacterized protein from Mus musculus (Mouse).